Reading from the N-terminus, the 327-residue chain is Aspartate--ammonia ligase (327 aa).

It belongs to the class-II aminoacyl-tRNA synthetase family. AsnA subfamily.

It localises to the cytoplasm. It carries out the reaction L-aspartate + NH4(+) + ATP = L-asparagine + AMP + diphosphate + H(+). Its pathway is amino-acid biosynthesis; L-asparagine biosynthesis; L-asparagine from L-aspartate (ammonia route): step 1/1. This Bacillus cereus (strain B4264) protein is Aspartate--ammonia ligase.